The chain runs to 480 residues: Ochratoxinase (480 aa).

His111, His113, Lys246, His287, and His307 together coordinate Zn(2+). Lys246 is a catalytic residue. Residue Asp378 is part of the active site.

Belongs to the metallo-dependent hydrolases superfamily. Ochratoxinase amidase 2 family. In terms of assembly, homooctamer. The cofactor is Zn(2+).

Its subcellular location is the secreted. The enzyme catalyses ochratoxin A + H2O = ochratoxin alpha + L-phenylalanine. Its activity is regulated as follows. The Zn(2+)-specific chelator 1,10-phenanthroline inhibits the enzyme activity. Carboxypeptidase that catalyzes the release of a C-terminal amino acid with specific catalytic activity for aromatic amino acids such as phenylalanine. Is able to degrade ochratoxin A, one of the five major mycotoxins most harmful to humans and animals that is produced by Aspergillus and Penicillium species and occurs in a wide range of agricultural products. In Aspergillus niger (strain ATCC 1015 / CBS 113.46 / FGSC A1144 / LSHB Ac4 / NCTC 3858a / NRRL 328 / USDA 3528.7), this protein is Ochratoxinase.